The sequence spans 364 residues: Mannose-1-phosphate guanyltransferase (364 aa).

It belongs to the transferase hexapeptide repeat family.

Its subcellular location is the cytoplasm. The enzyme catalyses alpha-D-mannose 1-phosphate + GTP + H(+) = GDP-alpha-D-mannose + diphosphate. The protein operates within nucleotide-sugar biosynthesis; GDP-alpha-D-mannose biosynthesis; GDP-alpha-D-mannose from alpha-D-mannose 1-phosphate (GTP route): step 1/1. In terms of biological role, involved in cell wall synthesis where it is required for glycosylation. Involved in cell cycle progression through cell-size checkpoint. This is Mannose-1-phosphate guanyltransferase (mpg1) from Emericella nidulans (strain FGSC A4 / ATCC 38163 / CBS 112.46 / NRRL 194 / M139) (Aspergillus nidulans).